The sequence spans 392 residues: Integrin-linked kinase-associated serine/threonine phosphatase 2C (392 aa).

Residue methionine 1 is modified to N-acetylmethionine. The disordered stretch occupies residues 1–91 (MDLFGDLPEP…PEEEKNGGEE (91 aa)). Residues 31-40 (DLPPTSSTDS) are compositionally biased toward low complexity. A compositionally biased stretch (polar residues) spans 59–70 (SGSLATSGSQVV). A compositionally biased stretch (basic and acidic residues) spans 72-91 (NEGKGAKRKAPEEEKNGGEE). One can recognise a PPM-type phosphatase domain in the interval 108-390 (KGYVAERKGE…DNVTVMVVRI (283 aa)). Aspartate 152 and glycine 153 together coordinate Mn(2+). The residue at position 210 (lysine 210) is an N6-acetyllysine. Mn(2+) is bound by residues aspartate 326 and aspartate 381.

Belongs to the PP2C family. As to quaternary structure, interacts with ILK. It depends on Mg(2+) as a cofactor. Requires Mn(2+) as cofactor. In terms of tissue distribution, widely expressed. Highest expression observed in kidney, liver and muscle.

Its subcellular location is the cytoplasm. The catalysed reaction is O-phospho-L-seryl-[protein] + H2O = L-seryl-[protein] + phosphate. The enzyme catalyses O-phospho-L-threonyl-[protein] + H2O = L-threonyl-[protein] + phosphate. Its function is as follows. Protein phosphatase that may play a role in regulation of cell cycle progression via dephosphorylation of its substrates whose appropriate phosphorylation states might be crucial for cell proliferation. Selectively associates with integrin linked kinase (ILK), to modulate cell adhesion and growth factor signaling. Inhibits the ILK-GSK3B signaling axis and may play an important role in inhibiting oncogenic transformation. The sequence is that of Integrin-linked kinase-associated serine/threonine phosphatase 2C (Ilkap) from Rattus norvegicus (Rat).